Consider the following 465-residue polypeptide: UPF0324 membrane protein CC_0425 (465 aa).

The disordered stretch occupies residues histidine 97–arginine 132. Positions glutamine 115 to arginine 132 are enriched in basic residues. The next 10 membrane-spanning stretches (helical) occupy residues alanine 135–valine 157, leucine 172–leucine 194, alanine 219–alanine 241, leucine 251–serine 273, threonine 286–alanine 308, alanine 318–serine 340, leucine 352–glutamine 374, isoleucine 378–leucine 400, proline 405–serine 427, and leucine 442–phenylalanine 464.

It belongs to the UPF0324 family.

It localises to the cell membrane. In Caulobacter vibrioides (strain ATCC 19089 / CIP 103742 / CB 15) (Caulobacter crescentus), this protein is UPF0324 membrane protein CC_0425.